A 195-amino-acid chain; its full sequence is SAGA-associated factor 11 homolog (195 aa).

Residues 1–22 (MSAANMPTTTGAQGSGNQVPRT) are disordered. Residues 105-126 (CTCPNCDRLVAAARFAPHLEKC) form an SGF11-type zinc finger. Positions 140–195 (RLATKEGATSAHLHSSGNTGGTDDEDDVDWSSDKRRKKSNQNSRNNGSKKNNGKTF) are disordered. Ser-171 carries the phosphoserine modification. Positions 179-195 (NQNSRNNGSKKNNGKTF) are enriched in low complexity.

Belongs to the SGF11 family. In terms of assembly, component of some SAGA transcription coactivator-HAT complexes, at least composed of Ada2b, not/nonstop, Pcaf/Gcn5, Sgf11 and Spt3. Within the SAGA complex, Sgf11, e(y)2, and not/nonstop form an additional subcomplex of SAGA called the DUB module (deubiquitination module). Interacts directly with not/nonstop. Interacts with the AMEX complex component xmas-2. Interacts with Cbp80; important for promoter recruitment of Sgf11 that is not associated with the DUB module.

It is found in the nucleus. The protein resides in the nucleoplasm. Its subcellular location is the cytoplasm. Its function is as follows. Component of the transcription regulatory histone acetylation (HAT) complex SAGA, a multiprotein complex that activates transcription by remodeling chromatin and mediating histone acetylation and deubiquitination. Within the SAGA complex, participates in a subcomplex that specifically deubiquitinates histone H2B. The SAGA complex is recruited to specific gene promoters by activators, where it is required for transcription. Required for nuclear receptor-mediated transactivation. Binds independently on SAGA to promoters in an RNA-dependent manner. Binds to mRNA and is essential for total mRNA export from the nucleus. Required to counteract heterochromatin silencing. Controls the development of neuronal connectivity in visual system by being required for accurate axon targeting in the optic lobe. Required for expression of ecdysone-induced genes such as br/broad. The polypeptide is SAGA-associated factor 11 homolog (Drosophila sechellia (Fruit fly)).